A 137-amino-acid polypeptide reads, in one-letter code: Neutral phospholipase A2 ammodytin I2 (137 aa).

Residues 1–16 (MRTLWIVAVCLIGVEG) form the signal peptide. 7 disulfide bridges follow: C42-C131, C44-C60, C59-C111, C65-C137, C66-C104, C73-C97, and C91-C102. Ca(2+) contacts are provided by Y43, G45, and G47. Residue H63 is part of the active site. Ca(2+) is bound at residue D64. The active site involves D105.

It belongs to the phospholipase A2 family. Group II subfamily. D49 sub-subfamily. Requires Ca(2+) as cofactor. Expressed by the venom gland.

The protein resides in the secreted. It carries out the reaction a 1,2-diacyl-sn-glycero-3-phosphocholine + H2O = a 1-acyl-sn-glycero-3-phosphocholine + a fatty acid + H(+). In terms of biological role, snake venom phospholipase A2 (PLA2) that has enzymatic activity but is non-toxic. Displays low binding affinity and enzymatic activity on phosphatidylserine-containing vesicles and HEK-293 plasma membranes, in contrast to ammodytoxins that have high activity on these phospholipids. PLA2 catalyzes the calcium-dependent hydrolysis of the 2-acyl groups in 3-sn-phosphoglycerides. The sequence is that of Neutral phospholipase A2 ammodytin I2 from Vipera ammodytes ammodytes (Western sand viper).